Reading from the N-terminus, the 669-residue chain is tRNA 5-methylaminomethyl-2-thiouridine biosynthesis bifunctional protein MnmC (669 aa).

The interval 1–246 is tRNA (mnm(5)s(2)U34)-methyltransferase; that stretch reads MIKNANIHFN…KRSMLIGTLK (246 aa). The interval 271 to 669 is FAD-dependent cmnm(5)s(2)U34 oxidoreductase; that stretch reads IGGGIASSCI…IVRDLIRNKI (399 aa).

This sequence in the N-terminal section; belongs to the methyltransferase superfamily. tRNA (mnm(5)s(2)U34)-methyltransferase family. It in the C-terminal section; belongs to the DAO family. FAD is required as a cofactor.

Its subcellular location is the cytoplasm. The catalysed reaction is 5-aminomethyl-2-thiouridine(34) in tRNA + S-adenosyl-L-methionine = 5-methylaminomethyl-2-thiouridine(34) in tRNA + S-adenosyl-L-homocysteine + H(+). In terms of biological role, catalyzes the last two steps in the biosynthesis of 5-methylaminomethyl-2-thiouridine (mnm(5)s(2)U) at the wobble position (U34) in tRNA. Catalyzes the FAD-dependent demodification of cmnm(5)s(2)U34 to nm(5)s(2)U34, followed by the transfer of a methyl group from S-adenosyl-L-methionine to nm(5)s(2)U34, to form mnm(5)s(2)U34. The sequence is that of tRNA 5-methylaminomethyl-2-thiouridine biosynthesis bifunctional protein MnmC from Pseudoalteromonas translucida (strain TAC 125).